The chain runs to 173 residues: Secreted RxLR effector protein RXLR-C12 (173 aa).

Residues 1–18 form the signal peptide; it reads MLQFATAFLAISANVVMT. A RxLR-dEER motif is present at residues 41–55; that stretch reads RRLRTHEIGTVPEER. N-linked (GlcNAc...) asparagine glycosylation is present at asparagine 155.

It belongs to the RxLR effector family.

The protein localises to the secreted. It localises to the host cytoplasm. Its subcellular location is the host nucleus. Its function is as follows. Secreted effector that suppresses pattern-triggered immunity (PTI) in plant host. The sequence is that of Secreted RxLR effector protein RXLR-C12 from Plasmopara halstedii (Downy mildew of sunflower).